Here is a 140-residue protein sequence, read N- to C-terminus: Putative esterase MT1895 (140 aa).

It belongs to the thioesterase PaaI family.

The protein is Putative esterase MT1895 of Mycobacterium tuberculosis (strain CDC 1551 / Oshkosh).